Reading from the N-terminus, the 101-residue chain is Apolipoprotein C-II (101 aa).

Positions 1–22 (MGIRYLLVLVLVLLVLGCEVQG) are cleaved as a signal peptide. Residues 66–74 (TMDEKIREI) form a lipid binding region. Residues 78-101 (STAAVSTYAGIFTDQLLSMLKGDQ) form a lipoprotein lipase cofactor region.

Belongs to the apolipoprotein C2 family. Proapolipoprotein C-II is synthesized as a sialic acid containing glycoprotein which is subsequently desialylated prior to its proteolytic processing. Post-translationally, proapolipoprotein C-II, the major form found in plasma undergoes proteolytic cleavage of its N-terminal hexapeptide to generate apolipoprotein C-II, which occurs as the minor form in plasma.

The protein resides in the secreted. In terms of biological role, component of chylomicrons, very low-density lipoproteins (VLDL), low-density lipoproteins (LDL), and high-density lipoproteins (HDL) in plasma. Plays an important role in lipoprotein metabolism as an activator of lipoprotein lipase. Both proapolipoprotein C-II and apolipoprotein C-II can activate lipoprotein lipase. The sequence is that of Apolipoprotein C-II (APOC2) from Leptonychotes weddellii (Weddell seal).